The chain runs to 855 residues: MQIEKVYEPQRFEPHWAQWWIDSNIFRANPESPGRVFSLVIPPPNVTGVLHIGHMLEHTEIDVSTRWHRMLGDNTLWLPGTDHAGIATQMVVARQLKEEGINYRDLGREKFEERVWQWKAQSGDTIKRQMVRLGASCDWSRERFTLDPGLSRAVREVFVSLYERGLLYRGEYMTNWCPSCNTAISDLEVAHADVAGHLWHIRYPVNGMPGRFVTVATTRPETMLGDTAIAVNAKDPRYQDLHGKTVQLPLMDREIPIILDDLADPQFGTGVVKVTPAHDPNDFEAGKRHNLAKIQVIDNNARMTAAAGPYAGLDRFDARKRVVSALEEIGALVKVEDYPLSLGKCDRCKTPVEPLISTQWFVKTKPLAEKAIAVVESGEIGFVPQNWTKTYYEWMYNIRDWCVSRQLWWGHRIPAWHCGECKEIIVAREAPKACPRCASENLTQDTDVLDTWFSSGLWPFSTLGWPDQTADLAKYYPTTLLITGFDILFFWVARMVMFGLEFMGEVPFKQVYIHGLVRDADRQKMSKTKGNVIDPLVVTEKYGTDAVRMALLQGAAPGTDIVLTEERMESSRAFANKIWNAARFLFMNADQSAAAPAEPTIEDRWIVSRLNAAAETANRAIEQYRYHELAQELWKFFWHEFCDWYLELKKVSATGWGNAVAAFETALRLLHPAMPFLTEELWQRLERKEGDPKSIALAQYPQYRAELADSEAEKEVAIIQEIVTLARTLRTESKLDPKQQLKGALYCRTASLAIAQRHADAIQKIARTTLEFKAEAPPKADVIRSTVEFDLVLDVPKVEEDPARKQKEREQLEKNIANSKRQLGDEVFLSKAPAKVVDSIRAKLVDYEAQLAKML.

The 'HIGH' region motif lies at 44–54 (PNVTGVLHIGH). The 'KMSKS' region motif lies at 524–528 (KMSKT). Residue Lys527 participates in ATP binding. Residues 797–827 (KVEEDPARKQKEREQLEKNIANSKRQLGDEV) are a coiled coil.

The protein belongs to the class-I aminoacyl-tRNA synthetase family. ValS type 1 subfamily. Monomer.

It is found in the cytoplasm. The enzyme catalyses tRNA(Val) + L-valine + ATP = L-valyl-tRNA(Val) + AMP + diphosphate. Functionally, catalyzes the attachment of valine to tRNA(Val). As ValRS can inadvertently accommodate and process structurally similar amino acids such as threonine, to avoid such errors, it has a 'posttransfer' editing activity that hydrolyzes mischarged Thr-tRNA(Val) in a tRNA-dependent manner. The polypeptide is Valine--tRNA ligase (Solibacter usitatus (strain Ellin6076)).